Reading from the N-terminus, the 243-residue chain is Myrosinase MB2 (243 aa).

Residue asparagine 30 is glycosylated (N-linked (GlcNAc...) asparagine). Tyrosine 51 provides a ligand contact to substrate. Residue glutamate 125 is the Nucleophile of the active site. Substrate contacts are provided by residues tryptophan 173 and 180–181 (EF). Asparagine 216 is a glycosylation site (N-linked (GlcNAc...) asparagine).

The protein belongs to the glycosyl hydrolase 1 family. In terms of assembly, homodimer. As to expression, in vacuoles called myrosin grains of a certain class of cells, myrosin cells, distributed in the cotyledons and the axis of the embryo as well as in different organs of the growing plant.

It is found in the vacuole. The enzyme catalyses a thioglucoside + H2O = a sugar + a thiol.. Functionally, degradation of glucosinolates (glucose residue linked by a thioglucoside bound to an amino acid derivative) to glucose, sulfate and any of the products: thiocyanates, isothiocyanates, nitriles, epithionitriles or oxazolidine-2-thiones. In Sinapis alba (White mustard), this protein is Myrosinase MB2.